The sequence spans 69 residues: uncharacterized protein (69 aa).

4Fe-4S ferredoxin-type domains are found at residues 2–30 and 38–67; these read KIEI…KSKK and PPIP…IELS. 8 residues coordinate [4Fe-4S] cluster: Cys10, Cys13, Cys16, Cys20, Cys47, Cys50, Cys53, and Cys57.

The cofactor is [4Fe-4S] cluster.

This is an uncharacterized protein from Methanocaldococcus jannaschii (strain ATCC 43067 / DSM 2661 / JAL-1 / JCM 10045 / NBRC 100440) (Methanococcus jannaschii).